The chain runs to 340 residues: MRPYPIHCVSIVIPVYNEEDSLPELLRRTEAACKQLRHDYEIVLVDDGSRDASAQLLEEAASVVDSPFVAVILNRNYGQHAAIMAGFEQCKGDVVITLDADLQNPPEEIPRLVAEAEKGFDVVGTVRGNRQDSALRRYPSKLINLAVQRSTGVAMSDYGCMLRAYRRTIIDAMLACRERSTFIPILANSFARHTTEIPVAHAEREHGDSKYSPMRLINLMFDLITCMTTTPLRLLSIVGFAMAGLGVLFAAALIFMRLAFGAGWAGDGLFVLFAVLFVFTGGQFIGMGLLGEYLGRMYSDVRARPRFFIEKVLRGHPATPAPAITVDGLTSNSTSDQVLS.

Transmembrane regions (helical) follow at residues 235-255 (LSIVGFAMAGLGVLFAAALIF) and 269-289 (LFVLFAVLFVFTGGQFIGMGL).

This sequence belongs to the glycosyltransferase 2 family.

Its subcellular location is the cell inner membrane. It carries out the reaction UDP-4-deoxy-4-formamido-beta-L-arabinose + di-trans,octa-cis-undecaprenyl phosphate = 4-deoxy-4-formamido-alpha-L-arabinopyranosyl di-trans,octa-cis-undecaprenyl phosphate + UDP. The protein operates within glycolipid biosynthesis; 4-amino-4-deoxy-alpha-L-arabinose undecaprenyl phosphate biosynthesis; 4-amino-4-deoxy-alpha-L-arabinose undecaprenyl phosphate from UDP-4-deoxy-4-formamido-beta-L-arabinose and undecaprenyl phosphate: step 1/2. It participates in bacterial outer membrane biogenesis; lipopolysaccharide biosynthesis. In terms of biological role, catalyzes the transfer of 4-deoxy-4-formamido-L-arabinose from UDP to undecaprenyl phosphate. The modified arabinose is attached to lipid A and is required for resistance to polymyxin and cationic antimicrobial peptides. This is Undecaprenyl-phosphate 4-deoxy-4-formamido-L-arabinose transferase from Pseudomonas fluorescens (strain Pf0-1).